We begin with the raw amino-acid sequence, 763 residues long: Endothelin-converting enzyme 2 (763 aa).

Residues 1-60 (MNVALHELGGGGSMVEYKRAKLRDEESPEITVEGRATRDSLEVGFQKRTRQLFGSHTQLE) lie on the Cytoplasmic side of the membrane. Position 27 is a phosphoserine (Ser27). Residues 61–81 (LVLAGLILVLAALLLGCLVAL) form a helical; Signal-anchor for type II membrane protein membrane-spanning segment. Topologically, residues 82 to 763 (WVHRDPAHST…MNPGQLCEVW (682 aa)) are lumenal. In terms of domain architecture, Peptidase M13 spans 91 to 763 (TCVTEACIRV…MNPGQLCEVW (673 aa)). Disulfide bonds link Cys92/Cys97, Cys115/Cys748, Cys123/Cys708, Cys179/Cys428, and Cys637/Cys760. 7 N-linked (GlcNAc...) asparagine glycosylation sites follow: Asn159, Asn163, Asn204, Asn264, Asn309, Asn376, and Asn532. His600 is a Zn(2+) binding site. The active site involves Glu601. Zn(2+) is bound at residue His604. N-linked (GlcNAc...) asparagine glycans are attached at residues Asn625 and Asn633. Glu660 lines the Zn(2+) pocket. Asp664 serves as the catalytic Proton donor.

The protein belongs to the peptidase M13 family. Zn(2+) is required as a cofactor.

It is found in the golgi apparatus membrane. The protein localises to the cytoplasmic vesicle. Its subcellular location is the secretory vesicle membrane. The catalysed reaction is Hydrolysis of the 21-Trp-|-Val-22 bond in big endothelin to form endothelin 1.. Functionally, converts big endothelin-1 to endothelin-1. Also involved in the processing of various neuroendocrine peptides, including neurotensin, angiotensin I, substance P, proenkephalin-derived peptides, and prodynorphin-derived peptides. May play a role in amyloid-beta processing. The chain is Endothelin-converting enzyme 2 from Mus musculus (Mouse).